The following is a 148-amino-acid chain: FAD synthase (148 aa).

ATP contacts are provided by residues 14-15 (TF), 19-22 (HPGH), and Asp-97.

The protein belongs to the archaeal FAD synthase family. As to quaternary structure, homodimer. It depends on a divalent metal cation as a cofactor.

The enzyme catalyses FMN + ATP + H(+) = FAD + diphosphate. It participates in cofactor biosynthesis; FAD biosynthesis; FAD from FMN: step 1/1. In terms of biological role, catalyzes the transfer of the AMP portion of ATP to flavin mononucleotide (FMN) to produce flavin adenine dinucleotide (FAD) coenzyme. This is FAD synthase from Natrialba magadii (strain ATCC 43099 / DSM 3394 / CCM 3739 / CIP 104546 / IAM 13178 / JCM 8861 / NBRC 102185 / NCIMB 2190 / MS3) (Natronobacterium magadii).